The following is a 337-amino-acid chain: P2Y purinoceptor 14 (337 aa).

Topologically, residues 1–28 (MNATSVPPAEGSCPSNALITKQIIPMLY) are extracellular. N-linked (GlcNAc...) asparagine glycosylation is present at asparagine 2. Residues 29 to 49 (FVVFVAGILLNGMSGWVFFYV) traverse the membrane as a helical segment. The Cytoplasmic portion of the chain corresponds to 50–54 (PSSKS). The helical transmembrane segment at 55-75 (FIVYLKNIVIADFLMSLTFPF) threads the bilayer. At 76-95 (KILGDLGLGLWQVKVFVCRV) the chain is on the extracellular side. Residues cysteine 93 and cysteine 171 are joined by a disulfide bond. The helical transmembrane segment at 96–116 (SAVLFYINMYVSIVFFGLIGF) threads the bilayer. At 117–138 (DRYYKIVKPLLTSFIQSISYSK) the chain is on the cytoplasmic side. A helical membrane pass occupies residues 139-159 (LLSVLVWSLTLLIALPNMILT). At 160-187 (NRNVTEATRVKCMDLKSDLGLKWHKASS) the chain is on the extracellular side. N-linked (GlcNAc...) asparagine glycosylation is present at asparagine 162. A helical membrane pass occupies residues 188 to 208 (YIFVGIFWIVFLSLIIFYTAI). Residues 209-233 (TKKIFKSHFKSRKNSVSVKKKSSRN) are Cytoplasmic-facing. Residues 234–254 (IFSIMFVFFICFVPYHIARIP) traverse the membrane as a helical segment. Over 255 to 277 (YTQSQTEAHYSCQSKQILFYVKE) the chain is Extracellular. Residues 278–298 (FSLLLSAANVCLDPIIYFFLC) traverse the membrane as a helical segment. At 299-337 (QPFREVLCKKLHIQLKTQHDSETSKIKRENIIQESTDTL) the chain is on the cytoplasmic side.

The protein belongs to the G-protein coupled receptor 1 family.

The protein resides in the cell membrane. Functionally, receptor for UDP-glucose and other UDP-sugar coupled to G-proteins. Not activated by ATP, ADP, UTP or ATP. This chain is P2Y purinoceptor 14 (P2RY14), found in Bos taurus (Bovine).